Here is a 295-residue protein sequence, read N- to C-terminus: UDP-N-acetylenolpyruvoylglucosamine reductase (295 aa).

The region spanning 23 to 188 is the FAD-binding PCMH-type domain; sequence KVGGPADFLA…ISAKFALKPG (166 aa). The active site involves Arg167. The active-site Proton donor is the Ser217. The active site involves Glu287.

Belongs to the MurB family. The cofactor is FAD.

It localises to the cytoplasm. The catalysed reaction is UDP-N-acetyl-alpha-D-muramate + NADP(+) = UDP-N-acetyl-3-O-(1-carboxyvinyl)-alpha-D-glucosamine + NADPH + H(+). Its pathway is cell wall biogenesis; peptidoglycan biosynthesis. In terms of biological role, cell wall formation. This Streptococcus pyogenes serotype M28 (strain MGAS6180) protein is UDP-N-acetylenolpyruvoylglucosamine reductase.